The chain runs to 842 residues: Translation initiation factor IF-2 (842 aa).

The tract at residues 94-259 (QRSPEEIQAE…HGFQNPTGPV (166 aa)) is disordered. A compositionally biased stretch (basic and acidic residues) spans 96–138 (SPEEIQAEQKRELDERRAAENAARDKVEAEVRQRNEEQARRQA). The segment covering 139 to 148 (ADSAVAAPAP) has biased composition (low complexity). A compositionally biased stretch (pro residues) spans 149–159 (AAKPEPAPAAA). Over residues 160–172 (PAPVVADAPASED) the composition is skewed to low complexity. Composition is skewed to basic and acidic residues over residues 173 to 202 (AAAR…RGEA) and 226 to 235 (TTDEESDGAR). A compositionally biased stretch (basic residues) spans 236 to 249 (RGRGGKGKLKKRNQ). One can recognise a tr-type G domain in the interval 342-509 (SRAPVVTVMG…AVLLQAEILE (168 aa)). A G1 region spans residues 351 to 358 (GHVDHGKT). Residue 351–358 (GHVDHGKT) coordinates GTP. Residues 376–380 (GITQH) are G2. A G3 region spans residues 397 to 400 (DTPG). Residues 397-401 (DTPGH) and 451-454 (NKID) each bind GTP. Residues 451 to 454 (NKID) are G4. The tract at residues 487 to 489 (SAK) is G5.

Belongs to the TRAFAC class translation factor GTPase superfamily. Classic translation factor GTPase family. IF-2 subfamily.

Its subcellular location is the cytoplasm. Functionally, one of the essential components for the initiation of protein synthesis. Protects formylmethionyl-tRNA from spontaneous hydrolysis and promotes its binding to the 30S ribosomal subunits. Also involved in the hydrolysis of GTP during the formation of the 70S ribosomal complex. In Pseudomonas putida (strain GB-1), this protein is Translation initiation factor IF-2.